A 35-amino-acid chain; its full sequence is uncharacterized protein (35 aa).

The helical transmembrane segment at 14–34 (VVVLLAICGAMLLLRWAAMIW) threads the bilayer.

The protein resides in the membrane. This is an uncharacterized protein from Escherichia coli (strain K12).